Here is a 490-residue protein sequence, read N- to C-terminus: Costunolide synthase (490 aa).

The helical; Signal-anchor for type II membrane protein transmembrane segment at 3-23 (PLTIVSLAVASFLLFAFWALS) threads the bilayer. Asn-167 and Asn-255 each carry an N-linked (GlcNAc...) asparagine glycan. Position 432 (Cys-432) interacts with heme.

Belongs to the cytochrome P450 family. It depends on heme as a cofactor.

It is found in the membrane. The catalysed reaction is germacra-1(10),4,11(13)-trien-12-oate + reduced [NADPH--hemoprotein reductase] + O2 = (+)-costunolide + oxidized [NADPH--hemoprotein reductase] + 2 H2O. It participates in secondary metabolite biosynthesis; terpenoid biosynthesis. Functionally, involved in the biosynthesis of germacrene-derived sesquiterpene lactones. Component of the parthenolide biosynthetic pathway; parthenolide and conjugates are promising anti-cancer drugs highly active against colon cancer cells. Hydroxylates germacrene A acid to 6-alpha-hydroxy-germacrne A acid, a precursor of sesquiterpene lactones that spontaneously undergoes a lactonization which yields costunolide. This Lactuca sativa (Garden lettuce) protein is Costunolide synthase.